A 95-amino-acid polypeptide reads, in one-letter code: Neurexophilin-3 (95 aa).

N-linked (GlcNAc...) asparagine glycosylation is found at N1 and N7. Residues 1–21 are III; that stretch reads NATGQGNISISLVPPSKAVEX. Positions 22–30 are IV (linker domain); sequence HQXQQIFIE. Positions 31–95 are v (Cys-rich); it reads AKASKIFNCR…YIAFYSTDYR (65 aa).

Belongs to the neurexophilin family.

It is found in the secreted. May be signaling molecules that resemble neuropeptides. Ligand for alpha-neurexins. The sequence is that of Neurexophilin-3 (NXPH3) from Macaca mulatta (Rhesus macaque).